The primary structure comprises 382 residues: Galactokinase (382 aa).

Position 34–37 (34–37 (EHTD)) interacts with substrate. 124 to 130 (GAGLSSS) lines the ATP pocket. 2 residues coordinate Mg(2+): Ser130 and Glu162. Asp174 serves as the catalytic Proton acceptor. Tyr223 serves as a coordination point for substrate.

It belongs to the GHMP kinase family. GalK subfamily.

It localises to the cytoplasm. It catalyses the reaction alpha-D-galactose + ATP = alpha-D-galactose 1-phosphate + ADP + H(+). It functions in the pathway carbohydrate metabolism; galactose metabolism. Functionally, catalyzes the transfer of the gamma-phosphate of ATP to D-galactose to form alpha-D-galactose-1-phosphate (Gal-1-P). This Shigella boydii serotype 4 (strain Sb227) protein is Galactokinase.